A 204-amino-acid polypeptide reads, in one-letter code: Golgi to ER traffic protein 1 (204 aa).

Over 1-11 the chain is Lumenal; the sequence is MLTLDIDPYTI. The helical transmembrane segment at 12–31 threads the bilayer; the sequence is LVTSFLILAIQKLVTVIGKQ. The Cytoplasmic portion of the chain corresponds to 32 to 116; it reads KIQLYIWQIY…RIDSITKLAI (85 aa). A coiled-coil region spans residues 78 to 113; the sequence is AKWTKINRALDKLKLEVQELNETIAGEKTRIDSITK. A helical transmembrane segment spans residues 117–137; that stretch reads TLILTLPIWFLRIFCRKTALL. Residues 138–161 lie on the Lumenal side of the membrane; it reads YIRKGILPAYLEWWLALPFFKSGT. The chain crosses the membrane as a helical span at residues 162 to 178; it reads IGLTCWMFVVNSVLSNL. Residues 179 to 204 lie on the Cytoplasmic side of the membrane; sequence IFLISFPFTQKVERPIKPKNEQKTES.

This sequence belongs to the WRB/GET1 family. As to quaternary structure, component of the Golgi to ER traffic (GET) complex, which is composed of GET1, GET2 and GET3. Within the complex, GET1 and GET2 form a heterotetramer which is stabilized by phosphatidylinositol binding and which binds to the GET3 homodimer.

The protein localises to the endoplasmic reticulum membrane. It localises to the golgi apparatus membrane. Required for the post-translational delivery of tail-anchored (TA) proteins to the endoplasmic reticulum. Together with GET2, acts as a membrane receptor for soluble GET3, which recognizes and selectively binds the transmembrane domain of TA proteins in the cytosol. The GET complex cooperates with the HDEL receptor ERD2 to mediate the ATP-dependent retrieval of resident ER proteins that contain a C-terminal H-D-E-L retention signal from the Golgi to the ER. This Lodderomyces elongisporus (strain ATCC 11503 / CBS 2605 / JCM 1781 / NBRC 1676 / NRRL YB-4239) (Yeast) protein is Golgi to ER traffic protein 1.